Reading from the N-terminus, the 350-residue chain is Ribosome production factor 2 homolog (350 aa).

The Brix domain occupies 28 to 266 (KTCLFLRGTT…LGRMREPDPA (239 aa)). Positions 192 to 202 (PTSSTSTNNDG) are enriched in polar residues. 2 disordered regions span residues 192 to 219 (PTSS…SIDP) and 301 to 350 (MGKT…KVKG).

Belongs to the RPF2 family. In terms of assembly, component of a hexameric 5S RNP precursor complex, composed of 5S RNA, RRS1, RPF2, RPL5, RPL11 and SYO1; this complex acts as a precursor for ribosome assembly.

It is found in the nucleus. It localises to the nucleolus. In terms of biological role, involved in ribosomal large subunit assembly. The chain is Ribosome production factor 2 homolog from Chaetomium thermophilum (strain DSM 1495 / CBS 144.50 / IMI 039719) (Thermochaetoides thermophila).